Here is a 226-residue protein sequence, read N- to C-terminus: Uracil-DNA glycosylase (226 aa).

Asp64 acts as the Proton acceptor in catalysis.

It belongs to the uracil-DNA glycosylase (UDG) superfamily. UNG family.

The protein localises to the cytoplasm. The enzyme catalyses Hydrolyzes single-stranded DNA or mismatched double-stranded DNA and polynucleotides, releasing free uracil.. Functionally, excises uracil residues from the DNA which can arise as a result of misincorporation of dUMP residues by DNA polymerase or due to deamination of cytosine. The chain is Uracil-DNA glycosylase from Vibrio vulnificus (strain CMCP6).